A 546-amino-acid polypeptide reads, in one-letter code: Sulfite oxidase, mitochondrial (546 aa).

The N-terminal 80 residues, M1–Q80, are a transit peptide targeting the mitochondrion. The region spanning P83–N162 is the Cytochrome b5 heme-binding domain. H119 serves as a coordination point for heme b. The residue at position 124 (S124) is a Phosphoserine. Residues H144, Q146, and H148 each coordinate heme b. The segment at R166–D175 is hinge. The interval P176–K402 is moco domain. Residues F216 to H220, C265, D323, H362, R367, and H378 to K380 contribute to the Mo-molybdopterin site. The segment at G403–R539 is homodimerization.

As to quaternary structure, homodimer. Requires heme b as cofactor. Mo-molybdopterin is required as a cofactor.

Its subcellular location is the mitochondrion intermembrane space. It carries out the reaction sulfite + O2 + H2O = sulfate + H2O2. It participates in energy metabolism; sulfur metabolism. Its function is as follows. Catalyzes the oxidation of sulfite to sulfate, the terminal reaction in the oxidative degradation of sulfur-containing amino acids. The sequence is that of Sulfite oxidase, mitochondrial from Rattus norvegicus (Rat).